A 222-amino-acid chain; its full sequence is N-(5'-phosphoribosyl)anthranilate isomerase (222 aa).

This sequence belongs to the TrpF family.

The enzyme catalyses N-(5-phospho-beta-D-ribosyl)anthranilate = 1-(2-carboxyphenylamino)-1-deoxy-D-ribulose 5-phosphate. The protein operates within amino-acid biosynthesis; L-tryptophan biosynthesis; L-tryptophan from chorismate: step 3/5. The sequence is that of N-(5'-phosphoribosyl)anthranilate isomerase from Xanthomonas euvesicatoria pv. vesicatoria (strain 85-10) (Xanthomonas campestris pv. vesicatoria).